A 264-amino-acid chain; its full sequence is Thymidylate synthase (264 aa).

Arg-21 is a dUMP binding site. His-51 is a (6R)-5,10-methylene-5,6,7,8-tetrahydrofolate binding site. 126-127 (RR) provides a ligand contact to dUMP. Cys-146 acts as the Nucleophile in catalysis. DUMP-binding positions include 166-169 (RSCD), Asn-177, and 207-209 (HLY). Asp-169 is a (6R)-5,10-methylene-5,6,7,8-tetrahydrofolate binding site. Ala-263 contributes to the (6R)-5,10-methylene-5,6,7,8-tetrahydrofolate binding site.

The protein belongs to the thymidylate synthase family. Bacterial-type ThyA subfamily. As to quaternary structure, homodimer.

The protein resides in the cytoplasm. It catalyses the reaction dUMP + (6R)-5,10-methylene-5,6,7,8-tetrahydrofolate = 7,8-dihydrofolate + dTMP. Its pathway is pyrimidine metabolism; dTTP biosynthesis. Catalyzes the reductive methylation of 2'-deoxyuridine-5'-monophosphate (dUMP) to 2'-deoxythymidine-5'-monophosphate (dTMP) while utilizing 5,10-methylenetetrahydrofolate (mTHF) as the methyl donor and reductant in the reaction, yielding dihydrofolate (DHF) as a by-product. This enzymatic reaction provides an intracellular de novo source of dTMP, an essential precursor for DNA biosynthesis. The polypeptide is Thymidylate synthase (Escherichia coli O9:H4 (strain HS)).